Reading from the N-terminus, the 469-residue chain is MYEAVIGLEVHLHLKTRTKMFCGCRADYFGAEPNTHTCPVCLGLPGALPVPNRVAVEHGLRLALALGAEVPERLVFHRKNYFYPDLPKNYQISQYDLPLGRGGSLPLGERRVRIKRLHLEEDAGKSLHLEGRTLLDLNRAGSPLIELVTEPDLKTPEEARLFLQRIQALVQTLGISDASPEEGKLRADVNVSVRRVGEPLGTKVEIKNLNSFKSVQRALEYEIRRQTEILRRGEKVKQATMGFEEGSGKTYPMRTKEEEADYRYFPEPDLPPVVIPRDWLEEVRRSLPELPWEKEARYRALGIKEKDAEVLAYTPSLARFLDQALPLGLASPQALANWLLADVAGLLHERGLRLEETRLSPEGLARLVGLFERGEVTSRVAKSLLPEVLEGQDPEALVRERGLKVVADEGALKALVAEAIAAMPEAAESVRQGKVKALDALVGQVMRKTRGQARPDLVRRLLLEALGVG.

Belongs to the GatB/GatE family. GatB subfamily. Heterotrimer of A, B and C subunits.

The enzyme catalyses L-glutamyl-tRNA(Gln) + L-glutamine + ATP + H2O = L-glutaminyl-tRNA(Gln) + L-glutamate + ADP + phosphate + H(+). It carries out the reaction L-aspartyl-tRNA(Asn) + L-glutamine + ATP + H2O = L-asparaginyl-tRNA(Asn) + L-glutamate + ADP + phosphate + 2 H(+). Functionally, allows the formation of correctly charged Asn-tRNA(Asn) or Gln-tRNA(Gln) through the transamidation of misacylated Asp-tRNA(Asn) or Glu-tRNA(Gln) in organisms which lack either or both of asparaginyl-tRNA or glutaminyl-tRNA synthetases. The reaction takes place in the presence of glutamine and ATP through an activated phospho-Asp-tRNA(Asn) or phospho-Glu-tRNA(Gln). The chain is Aspartyl/glutamyl-tRNA(Asn/Gln) amidotransferase subunit B from Thermus thermophilus (strain ATCC BAA-163 / DSM 7039 / HB27).